We begin with the raw amino-acid sequence, 179 residues long: Beta-defensin 22 (179 aa).

The signal sequence occupies residues 1–20 (MKSLLSTLVIIMFLAHLVTG). Cystine bridges form between Cys-27–Cys-58, Cys-34–Cys-52, and Cys-38–Cys-59. Residues 105–150 (GTPTKTSAPAKTSAPAKTSTTTKASNAAKASTTTKASNAAKASAAT) show a composition bias toward low complexity. Residues 105 to 152 (GTPTKTSAPAKTSAPAKTSTTTKASNAAKASTTTKASNAAKASAATMA) form a disordered region.

Belongs to the beta-defensin family. In terms of processing, O-glycosylated; glycans contain alpha(2,3)-linked sialic acids. As to expression, specifically expressed in corpus epididymis and cauda epididymis with expression in corpus being highest (at protein level). Not detected in other tissues tested, including testis, prostate, seminal vesicle and vas deferens (at protein level).

The protein localises to the cytoplasmic vesicle. It is found in the secretory vesicle. The protein resides in the acrosome. Its subcellular location is the secreted. It localises to the extracellular space. Functionally, probable component of sperm glycocalyx. Likely protects and facilitates transport of sperm in the female reproductive tract. Probably released from the sperm surface during capacitation. The sequence is that of Beta-defensin 22 from Mus musculus (Mouse).